We begin with the raw amino-acid sequence, 249 residues long: 2,5-diamino-6-ribosylamino-4(3H)-pyrimidinone 5'-phosphate reductase (249 aa).

NADP(+) contacts are provided by residues threonine 79, aspartate 83, methionine 164, and 187–191 (GGIVI).

This sequence belongs to the HTP reductase family. In terms of assembly, homodimer.

The catalysed reaction is 2,5-diamino-6-(1-D-ribitylamino)pyrimidin-4(3H)-one 5'-phosphate + NADP(+) = 2,5-diamino-6-(1-D-ribosylamino)pyrimidin-4(3H)-one 5'-phosphate + NADPH + H(+). It carries out the reaction 2,5-diamino-6-(1-D-ribitylamino)pyrimidin-4(3H)-one 5'-phosphate + NAD(+) = 2,5-diamino-6-(1-D-ribosylamino)pyrimidin-4(3H)-one 5'-phosphate + NADH + H(+). Its pathway is cofactor biosynthesis; riboflavin biosynthesis. Functionally, catalyzes an early step in riboflavin biosynthesis, the NADPH-dependent reduction of the ribose side chain of 2,5-diamino-6-ribosylamino-4(3H)-pyrimidinone 5'-phosphate, yielding 2,5-diamino-6-ribitylamino-4(3H)-pyrimidinone 5'-phosphate. This is 2,5-diamino-6-ribosylamino-4(3H)-pyrimidinone 5'-phosphate reductase (RIB7) from Kluyveromyces marxianus (Yeast).